The primary structure comprises 469 residues: MTTKTRFAPSPTGFLHVGGARTALYSWLQARANNGEFVLRIEDTDIERSTQAACDAILEGMNWLGLTWDEGPYYQTKRFDRYNEIIAQMLAKGTAYKCYCSRERIDALREAQAANGEAQKYDGCCRDLPARDTDEPFVVRFKNPIGGSVVFDDHVRGRIEFSNDALDDLIIARTDGVPTYNFCVVVDDWDMGITCVVRGEDHINNTPRQINILKALGAPIPEYAHVSMILGDDGAKLSKRHGAVSVMQYRDDGYLPEALLNYLVRLGWSHGDQEIFSLEEMKQYFKLGDINKAASAFNTDKLVWLNQHYIKSLAPEYVATHLQWHMDDQEIDLSNGPALAEVVTALAERAKTLKELAASSRYFYEDFAEFDEAQAKKHLRGVALEPLQLVQQKLAALTDWTVEAIHQAIEDTATELDVGMGKVGMPLRVAVTGAGQSPGLDITLFLIGRSRSEQRISKAIEFVADRINS.

Residues 9–19 carry the 'HIGH' region motif; sequence PSPTGFLHVGG. Zn(2+) is bound by residues Cys-98, Cys-100, Cys-125, and Asp-127. Positions 236 to 240 match the 'KMSKS' region motif; the sequence is KLSKR. Lys-239 provides a ligand contact to ATP.

It belongs to the class-I aminoacyl-tRNA synthetase family. Glutamate--tRNA ligase type 1 subfamily. As to quaternary structure, monomer. It depends on Zn(2+) as a cofactor.

It is found in the cytoplasm. The enzyme catalyses tRNA(Glu) + L-glutamate + ATP = L-glutamyl-tRNA(Glu) + AMP + diphosphate. Catalyzes the attachment of glutamate to tRNA(Glu) in a two-step reaction: glutamate is first activated by ATP to form Glu-AMP and then transferred to the acceptor end of tRNA(Glu). This chain is Glutamate--tRNA ligase, found in Shewanella baltica (strain OS155 / ATCC BAA-1091).